Here is a 285-residue protein sequence, read N- to C-terminus: MSWDDEDFDIPSNSKKTVAASWEDEEDDGPVLESWDVDPEEEEKKKKEAKLQEAKRKAELKAKEDAEKAKKDAKRKELEQFDQLDERTRKELLKKAELNADLNNAADLFGGLGVADDNDDDDFDINEHPRERITKQQLAAAAASKRPALTKDTPLEEHPLFQPTNKQEYEKLRKTVGTSLTRLNEDSSLLYASSLAVDLIRDLSQPLSVENLRKVISTLNVVIKDKERQERQARLKKAGGTATGGAGKKKAKPLARPNVGGGFKKDAFDDMDDGQFDDLDDDDFM.

2 disordered regions span residues 1 to 86 (MSWD…QLDE) and 232 to 285 (QARL…DDFM). Residues 22–41 (WEDEEDDGPVLESWDVDPEE) are compositionally biased toward acidic residues. Residues 36-81 (DVDPEEEEKKKKEAKLQEAKRKAELKAKEDAEKAKKDAKRKELEQF) adopt a coiled-coil conformation. Residues 42 to 86 (EEKKKKEAKLQEAKRKAELKAKEDAEKAKKDAKRKELEQFDQLDE) show a composition bias toward basic and acidic residues. The segment covering 269–285 (DDMDDGQFDDLDDDDFM) has biased composition (acidic residues).

This sequence belongs to the eIF-3 subunit J family. In terms of assembly, component of the eukaryotic translation initiation factor 3 (eIF-3) complex.

The protein localises to the cytoplasm. Functionally, component of the eukaryotic translation initiation factor 3 (eIF-3) complex, which is involved in protein synthesis of a specialized repertoire of mRNAs and, together with other initiation factors, stimulates binding of mRNA and methionyl-tRNAi to the 40S ribosome. The eIF-3 complex specifically targets and initiates translation of a subset of mRNAs involved in cell proliferation. The chain is Eukaryotic translation initiation factor 3 subunit J from Candida albicans (strain SC5314 / ATCC MYA-2876) (Yeast).